Here is a 542-residue protein sequence, read N- to C-terminus: Aminotriazole resistance protein (542 aa).

The Cytoplasmic portion of the chain corresponds to M1–S108. A helical transmembrane segment spans residues W109–G129. Residues D130–K136 are Extracellular-facing. A helical membrane pass occupies residues M137–Y157. The Cytoplasmic segment spans residues S158–G172. A helical membrane pass occupies residues L173–G193. The Extracellular portion of the chain corresponds to T194 to N198. The chain crosses the membrane as a helical span at residues I199–A219. The Cytoplasmic portion of the chain corresponds to G220–P231. The helical transmembrane segment at W232–I252 threads the bilayer. At P253–H262 the chain is on the extracellular side. A helical membrane pass occupies residues F263–V283. Over W284–A295 the chain is Cytoplasmic. Residues Y296–I316 form a helical membrane-spanning segment. At R317 to H333 the chain is on the extracellular side. A helical transmembrane segment spans residues M334–Y354. The Cytoplasmic segment spans residues Y355–G371. The helical transmembrane segment at G372–I392 threads the bilayer. The Extracellular segment spans residues K393–V399. A helical transmembrane segment spans residues F400–V420. The Cytoplasmic portion of the chain corresponds to H421–L429. Residues G430–F450 traverse the membrane as a helical segment. The Extracellular segment spans residues S451–L505. A glycan (N-linked (GlcNAc...) asparagine) is linked at N471. Residues G506–I526 traverse the membrane as a helical segment. The Cytoplasmic segment spans residues K527–A542.

Belongs to the major facilitator superfamily.

It is found in the membrane. Putative component of the machinery responsible for pumping aminotriazole (and possibly other toxic compounds) out of the cell. Probable ATP-dependent export permease. Appears to confer resistance only to aminotriazole. This chain is Aminotriazole resistance protein (ATR1), found in Saccharomyces cerevisiae (strain ATCC 204508 / S288c) (Baker's yeast).